A 246-amino-acid polypeptide reads, in one-letter code: Probable transcriptional regulatory protein HD_0596 (246 aa).

This sequence belongs to the TACO1 family.

The protein resides in the cytoplasm. This Haemophilus ducreyi (strain 35000HP / ATCC 700724) protein is Probable transcriptional regulatory protein HD_0596.